The sequence spans 278 residues: Probable endonuclease 4 (278 aa).

Zn(2+) contacts are provided by His-69, His-109, Glu-145, Asp-179, His-182, His-216, Asp-229, His-231, and Glu-261.

It belongs to the AP endonuclease 2 family. The cofactor is Zn(2+).

It catalyses the reaction Endonucleolytic cleavage to 5'-phosphooligonucleotide end-products.. In terms of biological role, endonuclease IV plays a role in DNA repair. It cleaves phosphodiester bonds at apurinic or apyrimidinic (AP) sites, generating a 3'-hydroxyl group and a 5'-terminal sugar phosphate. This chain is Probable endonuclease 4, found in Buchnera aphidicola subsp. Baizongia pistaciae (strain Bp).